We begin with the raw amino-acid sequence, 423 residues long: Carboxypeptidase B2 (423 aa).

An N-terminal signal peptide occupies residues 1–22 (MKLCSLAVLVPIVLFCEQHVFA). The propeptide at 23-114 (FQSGQVLAAL…QISNDTVSPR (92 aa)) is activation peptide. N-linked (GlcNAc...) asparagine glycosylation is found at Asn44, Asn73, and Asn85. Asn108 carries an N-linked (GlcNAc...) (complex) asparagine glycan. One can recognise a Peptidase M14 domain in the interval 122 to 419 (QYHSLNEIYS…AAVSKIAWHV (298 aa)). Cys178 and Cys191 form a disulfide bridge. The Zn(2+) site is built by His181 and Glu184. Substrate is bound by residues 181–184 (HARE) and Arg239. The N-linked (GlcNAc...) asparagine; partial glycan is linked to Asn241. Disulfide bonds link Cys250–Cys274 and Cys265–Cys279. 256–257 (NR) provides a ligand contact to substrate. His310 serves as a coordination point for Zn(2+). Substrate contacts are provided by residues 311 to 312 (SY) and Tyr363. The active-site Proton donor/acceptor is Glu385.

Belongs to the peptidase M14 family. It depends on Zn(2+) as a cofactor. N-glycosylated. N-glycan at Asn-108: Hex5HexNAc4. Plasma; synthesized in the liver.

The protein resides in the secreted. The catalysed reaction is Release of C-terminal Arg and Lys from a polypeptide.. Its activity is regulated as follows. TAFI/CPB2 is unique among carboxypeptidases in that it spontaneously inactivates with a short half-life, a property that is crucial for its role in controlling blood clot lysis. The zymogen is stabilized by interactions with the activation peptide. Release of the activation peptide increases a dynamic flap mobility and in time this leads to conformational changes that disrupt the catalytic site and expose a cryptic thrombin-cleavage site present at Arg-324. Functionally, cleaves C-terminal arginine or lysine residues from biologically active peptides such as kinins or anaphylatoxins in the circulation thereby regulating their activities. Down-regulates fibrinolysis by removing C-terminal lysine residues from fibrin that has already been partially degraded by plasmin. This is Carboxypeptidase B2 (CPB2) from Homo sapiens (Human).